Here is a 363-residue protein sequence, read N- to C-terminus: Nicotinamide adenine dinucleotide transporter 2, mitochondrial (363 aa).

3 Solcar repeats span residues 15-107 (REVA…LKDV), 115-203 (LSIG…IKQY), and 215-305 (LSPG…MLRF). The next 6 membrane-spanning stretches (helical) occupy residues 21-41 (AGAG…LDVI), 82-102 (GLSP…SVYG), 121-141 (MIAA…LWVV), 176-196 (LYSG…QFPA), 215-235 (LSPG…SILT), and 277-299 (LYRG…FTTY). The interval 313-363 (ETNRSDDRRREEERKNLVSRRGEEEDKDLGLRESQTQSNKISTPHIPLGSK) is disordered. Over residues 315–343 (NRSDDRRREEERKNLVSRRGEEEDKDLGL) the composition is skewed to basic and acidic residues. Positions 345–354 (ESQTQSNKIS) are enriched in polar residues.

The protein belongs to the mitochondrial carrier (TC 2.A.29) family. As to expression, highly expressed in young meristematic shoot area, vascular bundles of leaves, developing siliques including the funiculi, petal veins, developing pollen and central cylinder of roots.

It is found in the mitochondrion membrane. Inhibited by pyridoxal 5'-phosphate, bathophenanthroline, tannic acid, mersalyl, mercuric chloride, p-hydroxymercuribenzoate, p-hydroxymercuribenzoate sulfonate, bromocresol purple and N-ethylmaleimide. Mediates the NAD(+) import into chloroplast. Favors the NAD(+)(in)/ADP or AMP(out) antiport exchange, but is also able to catalyze a low unidirectional transport (uniport) of NAD(+). Transports NAD(+), nicotinic acid adenine dinucleotide, nicotinamide mononucleotide, nicotinic acid mononucleotide, FAD, FMN, TTP, TDP, TMP, UTP, UDP, UMP, CTP, CDP, CMP, GTP, GDP, GMP, 3'-AMP, ATP, ADP and AMP, has low transport activity with cAMP, NADH and alpha-NAD(+), and has no activity with NADP(+), NADPH, nicotinamide, nicotinic acid, adenosine, thiamine mono- or diphosphate, inorganic phosphate, CoA, folate, NaCl, malate, malonate, citrate, fumarate, aspartate, glutamate, S-adenosylmethionine, lysine, arginine, and ornithine. This chain is Nicotinamide adenine dinucleotide transporter 2, mitochondrial (NDT2), found in Arabidopsis thaliana (Mouse-ear cress).